A 145-amino-acid chain; its full sequence is Superoxide dismutase [Mn/Fe] (145 aa).

Fe(3+)-binding residues include His10 and His64. Mn(2+)-binding residues include His10 and His64.

Belongs to the iron/manganese superoxide dismutase family. Mn(2+) serves as cofactor. Fe(3+) is required as a cofactor.

It carries out the reaction 2 superoxide + 2 H(+) = H2O2 + O2. Functionally, destroys superoxide anion radicals which are normally produced within the cells and which are toxic to biological systems. Catalyzes the dismutation of superoxide anion radicals into O2 and H2O2 by successive reduction and oxidation of the transition metal ion at the active site. In Streptococcus acidominimus, this protein is Superoxide dismutase [Mn/Fe] (sodA).